We begin with the raw amino-acid sequence, 349 residues long: MVSIRPSVRHTPAYVPGEQPQTNDFIKLNTNENPYDPPAQVLAAVAAELPKVRLYPDPVSTQLRQAAADLYGVDLNQVLAGNGSDDILNIVVRTFVDPGETVAFLDLTYSLYETIASVHGAKVQKIATDANFDLTGPVICPEAKLIFLASPNPPKGKHLNREFLWQTCAQAEGVVVIDEAYGDFSDEDHWDFLQEFDNVIISRTLSKSYSLAGMRVGLAIAAPALIEEMDKVRDSYNLDRLAQVLGTAALRNQAEFVPLWEKVRHTRTRLMEQLAELDFQVCPSDANFVFAAPRWMAAADLYQALKEKKILVRYFNHPRITDYLRITVGTDGEIDQLLLAIASLKGSLG.

A disordered region spans residues 1–22 (MVSIRPSVRHTPAYVPGEQPQT). At lysine 207 the chain carries N6-(pyridoxal phosphate)lysine.

Belongs to the class-II pyridoxal-phosphate-dependent aminotransferase family. Histidinol-phosphate aminotransferase subfamily. In terms of assembly, homodimer. Pyridoxal 5'-phosphate is required as a cofactor.

It carries out the reaction L-histidinol phosphate + 2-oxoglutarate = 3-(imidazol-4-yl)-2-oxopropyl phosphate + L-glutamate. It participates in amino-acid biosynthesis; L-histidine biosynthesis; L-histidine from 5-phospho-alpha-D-ribose 1-diphosphate: step 7/9. The protein is Histidinol-phosphate aminotransferase (hisC) of Synechocystis sp. (strain ATCC 27184 / PCC 6803 / Kazusa).